The sequence spans 290 residues: tRNA dimethylallyltransferase (290 aa).

9–16 is an ATP binding site; the sequence is GPTASGKT. 11-16 is a substrate binding site; that stretch reads TASGKT. The interaction with substrate tRNA stretch occupies residues 34–37; the sequence is DSTQ.

It belongs to the IPP transferase family. Monomer. Mg(2+) serves as cofactor.

It catalyses the reaction adenosine(37) in tRNA + dimethylallyl diphosphate = N(6)-dimethylallyladenosine(37) in tRNA + diphosphate. Its function is as follows. Catalyzes the transfer of a dimethylallyl group onto the adenine at position 37 in tRNAs that read codons beginning with uridine, leading to the formation of N6-(dimethylallyl)adenosine (i(6)A). The protein is tRNA dimethylallyltransferase of Phytoplasma australiense.